The chain runs to 243 residues: Probable phosphatase CLI_3563 (243 aa).

Zn(2+) is bound by residues His8, His10, His16, His41, Glu74, His102, His132, Asp192, and His194.

This sequence belongs to the PHP family. It depends on Zn(2+) as a cofactor.

This is Probable phosphatase CLI_3563 from Clostridium botulinum (strain Langeland / NCTC 10281 / Type F).